Reading from the N-terminus, the 490-residue chain is Zinc finger protein STP4 (490 aa).

Composition is skewed to low complexity over residues 1–16 and 52–73; these read MLVS…SVMS and PSLP…STLN. The segment at 1-85 is disordered; the sequence is MLVSSSFASS…PPPPLTTSYS (85 aa). Phosphoserine occurs at positions 153 and 155. Residues 231-247 are compositionally biased toward low complexity; the sequence is QQQQQLNSSSSASALPS. The tract at residues 231 to 273 is disordered; sequence QQQQQLNSSSSASALPSIHSPLTNEHTSRYSSSLKDSAKITKQ. Over residues 250–265 the composition is skewed to polar residues; it reads SPLTNEHTSRYSSSLK. The C2H2-type zinc-finger motif lies at 304-326; it reads HKCPICQRGFARNNDLIRHKKRH. The segment at 338 to 375 is disordered; sequence ESDNNSGADDQDDTARTSANNDSDDSNDKLAASSSSEE.

Its subcellular location is the cytoplasm. It localises to the mitochondrion. The protein resides in the nucleus. The protein is Zinc finger protein STP4 (STP4) of Saccharomyces cerevisiae (strain ATCC 204508 / S288c) (Baker's yeast).